Here is a 130-residue protein sequence, read N- to C-terminus: Small ribosomal subunit protein uS8 (130 aa).

Residue Lys88 is modified to N6-succinyllysine.

It belongs to the universal ribosomal protein uS8 family. In terms of assembly, component of the small ribosomal subunit. Part of the small subunit (SSU) processome, composed of more than 70 proteins and the RNA chaperone small nucleolar RNA (snoRNA) U3.

The protein localises to the cytoplasm. Its subcellular location is the nucleus. It localises to the nucleolus. Functionally, component of the small ribosomal subunit. The ribosome is a large ribonucleoprotein complex responsible for the synthesis of proteins in the cell. Part of the small subunit (SSU) processome, first precursor of the small eukaryotic ribosomal subunit. During the assembly of the SSU processome in the nucleolus, many ribosome biogenesis factors, an RNA chaperone and ribosomal proteins associate with the nascent pre-rRNA and work in concert to generate RNA folding, modifications, rearrangements and cleavage as well as targeted degradation of pre-ribosomal RNA by the RNA exosome. Required for proper erythropoiesis. This chain is Small ribosomal subunit protein uS8 (Rps15a), found in Mus musculus (Mouse).